A 93-amino-acid polypeptide reads, in one-letter code: UPF0521 protein A (93 aa).

Residues 2-58 (SLKEVITSLKNDFHSINKEIDSMKENNEKQEDKIFQEIKKLKLEMELLRKDNLSFKT) are a coiled coil.

This sequence belongs to the UPF0521 family.

The protein is UPF0521 protein A of Dictyostelium discoideum (Social amoeba).